We begin with the raw amino-acid sequence, 122 residues long: Small ribosomal subunit protein uS13 (122 aa).

Residues 95-122 (NLPVRGQRTHTNARTRKGKAKPIAGKKK) form a disordered region.

This sequence belongs to the universal ribosomal protein uS13 family. As to quaternary structure, part of the 30S ribosomal subunit. Forms a loose heterodimer with protein S19. Forms two bridges to the 50S subunit in the 70S ribosome.

In terms of biological role, located at the top of the head of the 30S subunit, it contacts several helices of the 16S rRNA. In the 70S ribosome it contacts the 23S rRNA (bridge B1a) and protein L5 of the 50S subunit (bridge B1b), connecting the 2 subunits; these bridges are implicated in subunit movement. Contacts the tRNAs in the A and P-sites. In Methylobacterium sp. (strain 4-46), this protein is Small ribosomal subunit protein uS13.